The following is a 171-amino-acid chain: S-ribosylhomocysteine lyase (171 aa).

3 residues coordinate Fe cation: histidine 54, histidine 58, and cysteine 128.

Belongs to the LuxS family. As to quaternary structure, homodimer. It depends on Fe cation as a cofactor.

The enzyme catalyses S-(5-deoxy-D-ribos-5-yl)-L-homocysteine = (S)-4,5-dihydroxypentane-2,3-dione + L-homocysteine. Involved in the synthesis of autoinducer 2 (AI-2) which is secreted by bacteria and is used to communicate both the cell density and the metabolic potential of the environment. The regulation of gene expression in response to changes in cell density is called quorum sensing. Catalyzes the transformation of S-ribosylhomocysteine (RHC) to homocysteine (HC) and 4,5-dihydroxy-2,3-pentadione (DPD). The protein is S-ribosylhomocysteine lyase of Campylobacter concisus (strain 13826).